The following is a 206-amino-acid chain: MARYTGPDCRLCRREGMKLFLKGTKCFSEKCPFERRPFPPGQHGRAQRKLTEYGLRLREKQRAKRIYGVLERQFRRYFEIASKGRGVTGERLLQLLETRLDNVVYRLGWALSRAQARQIVSHGKIAVNGKRVNIPSYNLKPGDVVELLDKDLIPVQEAISVFGNKSVPAWLELDRENLRGKVLRLPKREEIDTPVQEQLIVEFYSR.

Residues 98 to 155 (TRLDNVVYRLGWALSRAQARQIVSHGKIAVNGKRVNIPSYNLKPGDVVELLDKDLIPV) form the S4 RNA-binding domain.

This sequence belongs to the universal ribosomal protein uS4 family. In terms of assembly, part of the 30S ribosomal subunit. Contacts protein S5. The interaction surface between S4 and S5 is involved in control of translational fidelity.

One of the primary rRNA binding proteins, it binds directly to 16S rRNA where it nucleates assembly of the body of the 30S subunit. In terms of biological role, with S5 and S12 plays an important role in translational accuracy. This chain is Small ribosomal subunit protein uS4, found in Dictyoglomus turgidum (strain DSM 6724 / Z-1310).